The following is a 245-amino-acid chain: Adenosylcobinamide-GDP ribazoletransferase (245 aa).

Transmembrane regions (helical) follow at residues 31–51 (FGRA…VLYG), 61–81 (PLLQ…ALHL), 113–133 (AAVV…AALL), 138–158 (PGLL…LFLT), and 192–212 (LAFG…FAWL).

This sequence belongs to the CobS family. Mg(2+) is required as a cofactor.

The protein localises to the cell inner membrane. It carries out the reaction alpha-ribazole + adenosylcob(III)inamide-GDP = adenosylcob(III)alamin + GMP + H(+). It catalyses the reaction alpha-ribazole 5'-phosphate + adenosylcob(III)inamide-GDP = adenosylcob(III)alamin 5'-phosphate + GMP + H(+). It participates in cofactor biosynthesis; adenosylcobalamin biosynthesis; adenosylcobalamin from cob(II)yrinate a,c-diamide: step 7/7. Joins adenosylcobinamide-GDP and alpha-ribazole to generate adenosylcobalamin (Ado-cobalamin). Also synthesizes adenosylcobalamin 5'-phosphate from adenosylcobinamide-GDP and alpha-ribazole 5'-phosphate. The sequence is that of Adenosylcobinamide-GDP ribazoletransferase from Pseudomonas paraeruginosa (strain DSM 24068 / PA7) (Pseudomonas aeruginosa (strain PA7)).